A 1400-amino-acid polypeptide reads, in one-letter code: DNA-directed RNA polymerase subunit beta' (1400 aa).

4 residues coordinate Zn(2+): C70, C72, C85, and C88. D460, D462, and D464 together coordinate Mg(2+). Zn(2+) is bound by residues C814, C888, C895, and C898. The tract at residues D1367–E1400 is disordered.

This sequence belongs to the RNA polymerase beta' chain family. The RNAP catalytic core consists of 2 alpha, 1 beta, 1 beta' and 1 omega subunit. When a sigma factor is associated with the core the holoenzyme is formed, which can initiate transcription. The cofactor is Mg(2+). Requires Zn(2+) as cofactor.

The enzyme catalyses RNA(n) + a ribonucleoside 5'-triphosphate = RNA(n+1) + diphosphate. In terms of biological role, DNA-dependent RNA polymerase catalyzes the transcription of DNA into RNA using the four ribonucleoside triphosphates as substrates. The sequence is that of DNA-directed RNA polymerase subunit beta' from Vibrio campbellii (strain ATCC BAA-1116).